The chain runs to 401 residues: MNILVINCGSSSLKFQLIDTDTEKVLANGICDRIGIEGSVLQYKNKEGKKSEKKEAMPNHTKAIEMVLEALTNKQNGAISSLDDIRAIGHRVVHGGEFFKESVLINDTVIAHIKECSDLAPLHNPANLMGIDVCKQKMPNTPMVAVFDTAFHQSMPPQAYTYGVPYEWYEKHKVRRYGFHGTSHKYVSQRTTEFLGLDYHNSKIIVCHLGNGSSISAIKNGKCVDTSMGLTPLEGLIMGTRCGDLDPAILEYISKREDLDIQSILNVLNKKSGVLGISGVSSDFRDLLDADLGGNERAKLARLAFAYRVMKYVGAYCAAMNGVDAVSFCAGVGENAKFIRGMIVKHLEFLGVELDEEANNICGQEAIISTANSKVKVCVIPTNEELVIARDTRAIVSQLKD.

Asn-7 provides a ligand contact to Mg(2+). Lys-14 contributes to the ATP binding site. Substrate is bound at residue Arg-91. The Proton donor/acceptor role is filled by Asp-148. ATP-binding positions include 208-212, 283-285, and 331-335; these read HLGNG, DFR, and GVGEN. Glu-384 lines the Mg(2+) pocket.

It belongs to the acetokinase family. Homodimer. The cofactor is Mg(2+). Mn(2+) serves as cofactor.

It is found in the cytoplasm. It catalyses the reaction acetate + ATP = acetyl phosphate + ADP. It participates in metabolic intermediate biosynthesis; acetyl-CoA biosynthesis; acetyl-CoA from acetate: step 1/2. Its function is as follows. Catalyzes the formation of acetyl phosphate from acetate and ATP. Can also catalyze the reverse reaction. The chain is Acetate kinase from Helicobacter hepaticus (strain ATCC 51449 / 3B1).